The primary structure comprises 305 residues: UDP-3-O-acyl-N-acetylglucosamine deacetylase (305 aa).

3 residues coordinate Zn(2+): H79, H238, and D242. The active-site Proton donor is H265.

This sequence belongs to the LpxC family. Requires Zn(2+) as cofactor.

It carries out the reaction a UDP-3-O-[(3R)-3-hydroxyacyl]-N-acetyl-alpha-D-glucosamine + H2O = a UDP-3-O-[(3R)-3-hydroxyacyl]-alpha-D-glucosamine + acetate. It participates in glycolipid biosynthesis; lipid IV(A) biosynthesis; lipid IV(A) from (3R)-3-hydroxytetradecanoyl-[acyl-carrier-protein] and UDP-N-acetyl-alpha-D-glucosamine: step 2/6. Functionally, catalyzes the hydrolysis of UDP-3-O-myristoyl-N-acetylglucosamine to form UDP-3-O-myristoylglucosamine and acetate, the committed step in lipid A biosynthesis. The polypeptide is UDP-3-O-acyl-N-acetylglucosamine deacetylase (Salmonella paratyphi A (strain ATCC 9150 / SARB42)).